A 73-amino-acid polypeptide reads, in one-letter code: DNA-directed RNA polymerase subunit omega (73 aa).

This sequence belongs to the RNA polymerase subunit omega family. The RNAP catalytic core consists of 2 alpha, 1 beta, 1 beta' and 1 omega subunit. When a sigma factor is associated with the core the holoenzyme is formed, which can initiate transcription.

It carries out the reaction RNA(n) + a ribonucleoside 5'-triphosphate = RNA(n+1) + diphosphate. Promotes RNA polymerase assembly. Latches the N- and C-terminal regions of the beta' subunit thereby facilitating its interaction with the beta and alpha subunits. This is DNA-directed RNA polymerase subunit omega from Clostridium novyi (strain NT).